Reading from the N-terminus, the 209-residue chain is LexA repressor (209 aa).

The H-T-H motif DNA-binding region spans 29 to 49 (VREIGSAIGLSSTSTVHGHID). Active-site for autocatalytic cleavage activity residues include Ser-130 and Lys-168.

The protein belongs to the peptidase S24 family. In terms of assembly, homodimer.

It carries out the reaction Hydrolysis of Ala-|-Gly bond in repressor LexA.. Its function is as follows. Represses a number of genes involved in the response to DNA damage (SOS response), including recA and lexA. In the presence of single-stranded DNA, RecA interacts with LexA causing an autocatalytic cleavage which disrupts the DNA-binding part of LexA, leading to derepression of the SOS regulon and eventually DNA repair. The protein is LexA repressor of Pediococcus pentosaceus (strain ATCC 25745 / CCUG 21536 / LMG 10740 / 183-1w).